The following is a 230-amino-acid chain: RNA chaperone ProQ (230 aa).

Positions 104–176 are disordered; the sequence is AEAKARVQAQ…APRQNTEKLT (73 aa). Residues 115–132 are compositionally biased toward basic and acidic residues; sequence AEQRAKKREAEGDKETSK.

This sequence belongs to the ProQ family.

Its subcellular location is the cytoplasm. Functionally, RNA chaperone with significant RNA binding, RNA strand exchange and RNA duplexing activities. May regulate ProP activity through an RNA-based, post-transcriptional mechanism. The protein is RNA chaperone ProQ of Proteus mirabilis (strain HI4320).